A 509-amino-acid polypeptide reads, in one-letter code: Dihydrolipoyl dehydrogenase, mitochondrial (509 aa).

The transit peptide at 1–35 (MQSWSRVYCSLVKRGHFSRISHGLQGVSVVPLRTY) directs the protein to the mitochondrion. At K66 the chain carries N6-acetyllysine; alternate. K66 is subject to N6-succinyllysine; alternate. FAD-binding positions include 71 to 80 (EKNETLGGTC) and K89. An intrachain disulfide couples C80 to C85. 4 positions are modified to N6-acetyllysine; alternate: K104, K122, K132, and K143. 4 positions are modified to N6-succinyllysine; alternate: K104, K122, K132, and K143. G154 lines the FAD pocket. 2 positions are modified to N6-succinyllysine: K159 and K166. 183 to 185 (TGS) serves as a coordination point for FAD. NAD(+)-binding positions include 220 to 227 (GAGVIGVE) and E243. 2 positions are modified to N6-succinyllysine: K273 and K277. Residue V278 participates in NAD(+) binding. A phosphoserine mark is found at S285 and S297. An NAD(+)-binding site is contributed by G314. Residue K346 is modified to N6-acetyllysine. FAD contacts are provided by residues D355 and 361 to 364 (MLAH). N6-acetyllysine; alternate is present on K410. K410 carries the N6-succinyllysine; alternate modification. Residues K417 and K420 each carry the N6-acetyllysine modification. K430 carries the post-translational modification N6-succinyllysine. The Proton acceptor role is filled by H487. K505 is subject to N6-acetyllysine; alternate. Residue K505 is modified to N6-succinyllysine; alternate.

This sequence belongs to the class-I pyridine nucleotide-disulfide oxidoreductase family. In terms of assembly, homodimer. Part of the multimeric pyruvate dehydrogenase complex that contains multiple copies of pyruvate dehydrogenase (subunits PDHA (PDHA1 or PDHA2) and PDHB, E1), dihydrolipoamide acetyltransferase (DLAT, E2) and lipoamide dehydrogenase (DLD, E3). These subunits are bound to an inner core composed of about 48 DLAT and 12 PDHX molecules (by non covalent bonds). The 2-oxoglutarate dehydrogenase complex is composed of OGDH (2-oxoglutarate dehydrogenase; E1), DLST (dihydrolipoamide succinyltransferase; E2), DLD (dihydrolipoamide dehydrogenase; E3) and the assembly factor KGD4. It contains multiple copies of the three enzymatic components (E1, E2 and E3). In the nucleus, the 2-oxoglutarate dehydrogenase complex associates with KAT2A. Interacts with PDHX. FAD serves as cofactor. Post-translationally, tyrosine phosphorylated.

The protein resides in the mitochondrion matrix. It is found in the nucleus. It localises to the cell projection. Its subcellular location is the cilium. The protein localises to the flagellum. The protein resides in the cytoplasmic vesicle. It is found in the secretory vesicle. It localises to the acrosome. It carries out the reaction N(6)-[(R)-dihydrolipoyl]-L-lysyl-[protein] + NAD(+) = N(6)-[(R)-lipoyl]-L-lysyl-[protein] + NADH + H(+). In terms of biological role, lipoamide dehydrogenase is a component of the glycine cleavage system as well as an E3 component of three alpha-ketoacid dehydrogenase complexes (pyruvate-, alpha-ketoglutarate-, and branched-chain amino acid-dehydrogenase complex). The 2-oxoglutarate dehydrogenase complex is mainly active in the mitochondrion. A fraction of the 2-oxoglutarate dehydrogenase complex also localizes in the nucleus and is required for lysine succinylation of histones: associates with KAT2A on chromatin and provides succinyl-CoA to histone succinyltransferase KAT2A. In monomeric form may have additional moonlighting function as serine protease. Involved in the hyperactivation of spermatazoa during capacitation and in the spermatazoal acrosome reaction. In Bos taurus (Bovine), this protein is Dihydrolipoyl dehydrogenase, mitochondrial (DLD).